We begin with the raw amino-acid sequence, 208 residues long: Small ribosomal subunit protein uS4 (208 aa).

Residues 97–160 (TRLDNVCYRM…QKQLRVQEAL (64 aa)) form the S4 RNA-binding domain.

The protein belongs to the universal ribosomal protein uS4 family. Part of the 30S ribosomal subunit. Contacts protein S5. The interaction surface between S4 and S5 is involved in control of translational fidelity.

In terms of biological role, one of the primary rRNA binding proteins, it binds directly to 16S rRNA where it nucleates assembly of the body of the 30S subunit. Functionally, with S5 and S12 plays an important role in translational accuracy. The chain is Small ribosomal subunit protein uS4 from Xanthomonas axonopodis pv. citri (strain 306).